A 268-amino-acid chain; its full sequence is Ubiquinone biosynthesis protein COQ4 homolog, mitochondrial (268 aa).

Zn(2+) contacts are provided by H171, D172, H175, and E187.

It belongs to the COQ4 family. In terms of assembly, component of a multi-subunit COQ enzyme complex. Zn(2+) serves as cofactor.

The protein resides in the mitochondrion inner membrane. It catalyses the reaction a 4-hydroxy-3-methoxy-5-(all-trans-polyprenyl)benzoate + H(+) = a 2-methoxy-6-(all-trans-polyprenyl)phenol + CO2. It functions in the pathway cofactor biosynthesis; ubiquinone biosynthesis. Functionally, lyase that catalyzes the C1-decarboxylation of 4-hydroxy-3-methoxy-5-(all-trans-polyprenyl)benzoic acid into 2-methoxy-6-(all-trans-polyprenyl)phenol during ubiquinone biosynthesis. This Drosophila sechellia (Fruit fly) protein is Ubiquinone biosynthesis protein COQ4 homolog, mitochondrial.